The primary structure comprises 429 residues: Adenylosuccinate synthetase (429 aa).

GTP contacts are provided by residues 12 to 18 (GDEGKGK) and 40 to 42 (GHT). Asp-13 serves as the catalytic Proton acceptor. Mg(2+) is bound by residues Asp-13 and Gly-40. IMP contacts are provided by residues 13-16 (DEGK), 38-41 (NAGH), Thr-128, Arg-142, Gln-223, Thr-238, and Arg-302. The active-site Proton donor is His-41. 298–304 (TTTGRPR) is a binding site for substrate. Residues Arg-304, 330–332 (CID), and 412–414 (SVG) contribute to the GTP site.

The protein belongs to the adenylosuccinate synthetase family. As to quaternary structure, homodimer. Mg(2+) serves as cofactor.

Its subcellular location is the cytoplasm. It carries out the reaction IMP + L-aspartate + GTP = N(6)-(1,2-dicarboxyethyl)-AMP + GDP + phosphate + 2 H(+). The protein operates within purine metabolism; AMP biosynthesis via de novo pathway; AMP from IMP: step 1/2. Functionally, plays an important role in the de novo pathway of purine nucleotide biosynthesis. Catalyzes the first committed step in the biosynthesis of AMP from IMP. The polypeptide is Adenylosuccinate synthetase (Streptococcus mutans serotype c (strain ATCC 700610 / UA159)).